The following is a 298-amino-acid chain: Protein Bel-1 (298 aa).

Basic and acidic residues predominate over residues 1 to 17 (MASWEKEKELAHLHQPE). The interval 1–46 (MASWEKEKELAHLHQPEDDPLPDLSLLLDMDQFEPTEGPDSNPGAE) is disordered. Residues 91–200 (SKWACARLIL…GEPLKPRVRA (110 aa)) mediate DNA binding. Residues 214–223 (ADRPKRSRWG) carry the Nuclear localization signal motif. The segment at 225 to 298 (APREQPNTSS…SGPPTGPSEN (74 aa)) is transactivation domain.

Homodimer or homomultimer. Forms complexes with the host nuclear factors NFIA, NFIB, NFIC or NFIX.

The protein localises to the host nucleus. Transcriptional transactivator that activates the viral internal promoter (IP), thereby enhancing its own expression. This transactivation is repressed by nuclear factor I. Also transactivates the long terminal repeat (LTR) promoter, thereby inducing structural gene expression, initiating the late phase of infection. It is therefore a key regulator of viral gene expression. It directly binds to and activates DNA target sites of viral promoters and those of distinct cellular genes. Required for viral replication. The polypeptide is Protein Bel-1 (bel1) (Chlorocebus aethiops (Green monkey)).